The following is a 350-amino-acid chain: Biotin synthase (350 aa).

Residues 38-265 (NHVQVSTLLS…MSAVRLSAGR (228 aa)) enclose the Radical SAM core domain. Positions 53, 57, and 60 each coordinate [4Fe-4S] cluster. 4 residues coordinate [2Fe-2S] cluster: C97, C128, C188, and R260.

The protein belongs to the radical SAM superfamily. Biotin synthase family. In terms of assembly, homodimer. Requires [4Fe-4S] cluster as cofactor. The cofactor is [2Fe-2S] cluster.

The enzyme catalyses (4R,5S)-dethiobiotin + (sulfur carrier)-SH + 2 reduced [2Fe-2S]-[ferredoxin] + 2 S-adenosyl-L-methionine = (sulfur carrier)-H + biotin + 2 5'-deoxyadenosine + 2 L-methionine + 2 oxidized [2Fe-2S]-[ferredoxin]. It participates in cofactor biosynthesis; biotin biosynthesis; biotin from 7,8-diaminononanoate: step 2/2. Its function is as follows. Catalyzes the conversion of dethiobiotin (DTB) to biotin by the insertion of a sulfur atom into dethiobiotin via a radical-based mechanism. This Vibrio atlanticus (strain LGP32) (Vibrio splendidus (strain Mel32)) protein is Biotin synthase.